A 224-amino-acid polypeptide reads, in one-letter code: Orotidine 5'-phosphate decarboxylase (224 aa).

Substrate-binding positions include Asp10, Lys32, 59-68, Thr115, Arg175, Gln184, Gly204, and Arg205; that span reads DLKLHDIPNT. Lys61 (proton donor) is an active-site residue.

This sequence belongs to the OMP decarboxylase family. Type 1 subfamily. In terms of assembly, homodimer.

It catalyses the reaction orotidine 5'-phosphate + H(+) = UMP + CO2. It participates in pyrimidine metabolism; UMP biosynthesis via de novo pathway; UMP from orotate: step 2/2. Its function is as follows. Catalyzes the decarboxylation of orotidine 5'-monophosphate (OMP) to uridine 5'-monophosphate (UMP). The polypeptide is Orotidine 5'-phosphate decarboxylase (Sphingopyxis alaskensis (strain DSM 13593 / LMG 18877 / RB2256) (Sphingomonas alaskensis)).